Consider the following 546-residue polypeptide: Chaperonin GroEL 1 (546 aa).

Residues threonine 30 to proline 33, lysine 51, aspartate 87 to threonine 91, glycine 415, asparagine 479 to alanine 481, and aspartate 495 each bind ATP. Residues lysine 526–methionine 546 form a disordered region. Over residues glycine 534–methionine 546 the composition is skewed to gly residues.

It belongs to the chaperonin (HSP60) family. Forms a cylinder of 14 subunits composed of two heptameric rings stacked back-to-back. Interacts with the co-chaperonin GroES.

It localises to the cytoplasm. The catalysed reaction is ATP + H2O + a folded polypeptide = ADP + phosphate + an unfolded polypeptide.. Functionally, together with its co-chaperonin GroES, plays an essential role in assisting protein folding. The GroEL-GroES system forms a nano-cage that allows encapsulation of the non-native substrate proteins and provides a physical environment optimized to promote and accelerate protein folding. The polypeptide is Chaperonin GroEL 1 (Burkholderia vietnamiensis (strain G4 / LMG 22486) (Burkholderia cepacia (strain R1808))).